The sequence spans 481 residues: Aromatic amino acid aminotransferase DDB_G0272014 (481 aa).

Lysine 300 carries the post-translational modification N6-(pyridoxal phosphate)lysine.

This sequence belongs to the class-I pyridoxal-phosphate-dependent aminotransferase family. Pyridoxal 5'-phosphate serves as cofactor.

The protein localises to the cytoplasm. The catalysed reaction is an aromatic L-alpha-amino acid + 2-oxoglutarate = an aromatic oxo-acid + L-glutamate. Its function is as follows. Has aromatic amino acid transaminase activity. The chain is Aromatic amino acid aminotransferase DDB_G0272014 from Dictyostelium discoideum (Social amoeba).